The sequence spans 240 residues: 4-hydroxy-tetrahydrodipicolinate reductase (240 aa).

NAD(+) is bound by residues Ala-79–Thr-81 and Ser-103–Met-106. The active-site Proton donor/acceptor is the His-135. His-136 contributes to the (S)-2,3,4,5-tetrahydrodipicolinate binding site. Lys-139 functions as the Proton donor in the catalytic mechanism. A (S)-2,3,4,5-tetrahydrodipicolinate-binding site is contributed by Gly-145 to Thr-146.

Belongs to the DapB family.

It localises to the cytoplasm. It catalyses the reaction (S)-2,3,4,5-tetrahydrodipicolinate + NAD(+) + H2O = (2S,4S)-4-hydroxy-2,3,4,5-tetrahydrodipicolinate + NADH + H(+). It carries out the reaction (S)-2,3,4,5-tetrahydrodipicolinate + NADP(+) + H2O = (2S,4S)-4-hydroxy-2,3,4,5-tetrahydrodipicolinate + NADPH + H(+). It functions in the pathway amino-acid biosynthesis; L-lysine biosynthesis via DAP pathway; (S)-tetrahydrodipicolinate from L-aspartate: step 4/4. Its function is as follows. Catalyzes the conversion of 4-hydroxy-tetrahydrodipicolinate (HTPA) to tetrahydrodipicolinate. The chain is 4-hydroxy-tetrahydrodipicolinate reductase from Staphylococcus aureus (strain MSSA476).